Reading from the N-terminus, the 294-residue chain is ATP phosphoribosyltransferase (294 aa).

The protein belongs to the ATP phosphoribosyltransferase family. Long subfamily. The cofactor is Mg(2+).

The protein resides in the cytoplasm. The enzyme catalyses 1-(5-phospho-beta-D-ribosyl)-ATP + diphosphate = 5-phospho-alpha-D-ribose 1-diphosphate + ATP. Its pathway is amino-acid biosynthesis; L-histidine biosynthesis; L-histidine from 5-phospho-alpha-D-ribose 1-diphosphate: step 1/9. Its activity is regulated as follows. Feedback inhibited by histidine. Functionally, catalyzes the condensation of ATP and 5-phosphoribose 1-diphosphate to form N'-(5'-phosphoribosyl)-ATP (PR-ATP). Has a crucial role in the pathway because the rate of histidine biosynthesis seems to be controlled primarily by regulation of HisG enzymatic activity. This chain is ATP phosphoribosyltransferase, found in Chlorobium luteolum (strain DSM 273 / BCRC 81028 / 2530) (Pelodictyon luteolum).